A 625-amino-acid chain; its full sequence is MESSYVVFILLSLILLPNHSLWLASANLEGDALHTLRVTLVDPNNVLQSWDPTLVNPCTWFHVTCNNENSVIRVDLGNAELSGHLVPELGVLKNLQYLELYSNNITGPIPSNLGNLTNLVSLDLYLNSFSGPIPESLGKLSKLRFLRLNNNSLTGSIPMSLTNITTLQVLDLSNNRLSGSVPDNGSFSLFTPISFANNLDLCGPVTSHPCPGSPPFSPPPPFIQPPPVSTPSGYGITGAIAGGVAAGAALLFAAPAIAFAWWRRRKPLDIFFDVPAEEDPEVHLGQLKRFSLRELQVASDGFSNKNILGRGGFGKVYKGRLADGTLVAVKRLKEERTPGGELQFQTEVEMISMAVHRNLLRLRGFCMTPTERLLVYPYMANGSVASCLRERPPSQPPLDWPTRKRIALGSARGLSYLHDHCDPKIIHRDVKAANILLDEEFEAVVGDFGLAKLMDYKDTHVTTAVRGTIGHIAPEYLSTGKSSEKTDVFGYGIMLLELITGQRAFDLARLANDDDVMLLDWVKGLLKEKKLEMLVDPDLQTNYEERELEQVIQVALLCTQGSPMERPKMSEVVRMLEGDGLAEKWDEWQKVEILREEIDLSPNPNSDWILDSTYNLHAVELSGPR.

An N-terminal signal peptide occupies residues Met-1–Ala-26. At Asn-27 to Gly-238 the chain is on the extracellular side. The cysteines at positions 58 and 65 are disulfide-linked. 2 leucine-rich repeat receptor-like protein kinase binding regions span residues Thr-59 to Asn-78 and Tyr-97 to Ser-102. Phe-61–His-62 provides a ligand contact to brassinolide. 4 LRR repeats span residues Leu-92–Leu-116, Asn-118–Leu-140, Ser-141–Ile-164, and Thr-165–Leu-189. 2 N-linked (GlcNAc...) asparagine glycosylation sites follow: Asn-104 and Asn-115. Leucine-rich repeat receptor-like protein kinase binding regions lie at residues Asp-123 to Leu-126 and Phe-145 to Arg-147. Residues Asn-150, Asn-163, and Asn-184 are each glycosylated (N-linked (GlcNAc...) asparagine). The tract at residues Asp-171 to Ser-194 is leucine-rich repeat receptor-like protein kinase binding. A disulfide bridge connects residues Cys-202 and Cys-210. A helical membrane pass occupies residues Ala-239 to Phe-259. Over Ala-260–Arg-625 the chain is Cytoplasmic. Ser-291, Ser-299, and Ser-303 each carry phosphoserine. The Protein kinase domain occupies Phe-302 to Gln-589. Residue Leu-308–Val-316 participates in ATP binding. Thr-325 carries the phosphothreonine modification. Lys-330 serves as a coordination point for ATP. 2 positions are modified to phosphothreonine: Thr-337 and Thr-346. Phosphoserine occurs at positions 352, 383, 386, and 394. Thr-402 is modified (phosphothreonine). The residue at position 415 (Ser-415) is a Phosphoserine. Asp-429 serves as the catalytic Proton acceptor. Phosphotyrosine is present on Tyr-456. Phosphothreonine occurs at positions 459, 462, 463, and 468. Tyr-476 carries the post-translational modification Phosphotyrosine. The residue at position 478 (Ser-478) is a Phosphoserine. Residue Thr-479 is modified to Phosphothreonine. Ser-483 carries the phosphoserine modification. A Phosphothreonine modification is found at Thr-541. Position 543 is a phosphotyrosine (Tyr-543). The residue at position 559 (Thr-559) is a Phosphothreonine. Ser-606 and Ser-612 each carry phosphoserine. Thr-613 is modified (phosphothreonine). Tyr-614 carries the post-translational modification Phosphotyrosine. Ser-622 is subject to Phosphoserine.

It belongs to the protein kinase superfamily. Ser/Thr protein kinase family. In terms of assembly, monomer, homo- and heterodimer. Interacts with KAPP, CDC48A, GRF6 or GRF7, SERK2, BRI1 and SERK3/BAK1 to form the SERK1 signaling complex. Bind to BRI1 in a brassinolide-dependent manner. Heterodimer with PSKR1. Interacts with the EF-Tu receptor EFR and FLS2 in a specific ligand-induced manner. Interacts with ERECTA in a EPF2-induced manner. Interacts with ERL1 in a EPF1-induced manner. Interacts with TMM. In the presence of the signal peptide RGF1, interacts with RGI1/RGFR4/RCH2, RGI2/RGFR3/RCH1, RGI3/RGFR1, RGI4/RGFR2/SKM2 and RGI5/RGFR5. Requires Mg(2+) as cofactor. Glycosylated. Important for targeting to the plasma membrane. Post-translationally, intermolecular autophosphorylation. The catalytic activity of SERK1 depends on the presence of a phosphorylated Thr residue in SERK1. The phosphorylation is induced by brassinosteroids. Transphosphorylation by BRI1 occurs only on Ser-299 and Thr-462. Dephosphorylation of threonine residues by the kinase-associated protein phosphatase (KAPP) is involved in SERK1 endocytosis. In terms of tissue distribution, expressed in flowers, tapetum, developing microspores, all cells of the embryo sac, provascular strands and developing vascular bundles. Low expression in adult vascular tissue. Detected in root meristem.

The protein localises to the cell membrane. It localises to the endoplasmic reticulum membrane. The enzyme catalyses L-seryl-[protein] + ATP = O-phospho-L-seryl-[protein] + ADP + H(+). The catalysed reaction is L-threonyl-[protein] + ATP = O-phospho-L-threonyl-[protein] + ADP + H(+). It catalyses the reaction L-tyrosyl-[protein] + ATP = O-phospho-L-tyrosyl-[protein] + ADP + H(+). Inhibited by manganese. Its function is as follows. Dual specificity kinase acting on both serine/threonine- and tyrosine-containing substrates. Phosphorylates BRI1 on 'Ser-887' and CDC48 on at least one threonine residue and on 'Ser-41'. Confers embryogenic competence. Acts redundantly with SERK2 as a control point for sporophytic development controlling male gametophyte production. Involved in the brassinolide signaling pathway. Probably required during small peptide (e.g. RGF1) signaling. Involved in the perception of phytosulfokine and subsequent signal transduction. Acts as a RLK5 coreceptor and promotes high-affinity IDA sensing, thus being a positive regulator of floral abscission. This is Somatic embryogenesis receptor kinase 1 from Arabidopsis thaliana (Mouse-ear cress).